Reading from the N-terminus, the 898-residue chain is Alanine--tRNA ligase (898 aa).

Positions 589, 593, 693, and 697 each coordinate Zn(2+).

Belongs to the class-II aminoacyl-tRNA synthetase family. Requires Zn(2+) as cofactor.

The protein resides in the cytoplasm. It catalyses the reaction tRNA(Ala) + L-alanine + ATP = L-alanyl-tRNA(Ala) + AMP + diphosphate. Functionally, catalyzes the attachment of alanine to tRNA(Ala) in a two-step reaction: alanine is first activated by ATP to form Ala-AMP and then transferred to the acceptor end of tRNA(Ala). Also edits incorrectly charged Ser-tRNA(Ala) and Gly-tRNA(Ala) via its editing domain. In Methanothermobacter thermautotrophicus (strain ATCC 29096 / DSM 1053 / JCM 10044 / NBRC 100330 / Delta H) (Methanobacterium thermoautotrophicum), this protein is Alanine--tRNA ligase.